A 190-amino-acid polypeptide reads, in one-letter code: Ferric nitrobindin-like protein (190 aa).

The GXWXGXG motif lies at 20–26; that stretch reads GNWAGAG.

It belongs to the nitrobindin family.

In Streptomyces griseus subsp. griseus (strain JCM 4626 / CBS 651.72 / NBRC 13350 / KCC S-0626 / ISP 5235), this protein is Ferric nitrobindin-like protein.